A 135-amino-acid polypeptide reads, in one-letter code: Small ribosomal subunit protein uS9 (135 aa).

Over residues 108 to 118 (VGDSRRTEPHK) the composition is skewed to basic and acidic residues. The disordered stretch occupies residues 108–135 (VGDSRRTEPHKPNRSTKGPRAKRQKSYR). The segment covering 119 to 135 (PNRSTKGPRAKRQKSYR) has biased composition (basic residues).

It belongs to the universal ribosomal protein uS9 family. Part of the 30S ribosomal subunit.

The polypeptide is Small ribosomal subunit protein uS9 (Thermococcus kodakarensis (strain ATCC BAA-918 / JCM 12380 / KOD1) (Pyrococcus kodakaraensis (strain KOD1))).